We begin with the raw amino-acid sequence, 108 residues long: Tubulin-specific chaperone A (108 aa).

Ala-2 carries the N-acetylalanine modification.

This sequence belongs to the TBCA family. As to quaternary structure, supercomplex made of cofactors A to E. Cofactors A and D function by capturing and stabilizing tubulin in a quasi-native conformation. Cofactor E binds to the cofactor D-tubulin complex; interaction with cofactor C then causes the release of tubulin polypeptides that are committed to the native state. Widely expressed, but is most abundant in the testis.

Its subcellular location is the cytoplasm. The protein localises to the cytoskeleton. Functionally, tubulin-folding protein; involved in the early step of the tubulin folding pathway. This chain is Tubulin-specific chaperone A (TBCA), found in Bos taurus (Bovine).